A 732-amino-acid chain; its full sequence is Elongation factor 2 (732 aa).

Positions 19–228 constitute a tr-type G domain; it reads ELVRNIGIVA…TKITFKDIVE (210 aa). GTP is bound by residues 28–35, 94–98, and 148–151; these read AHIDHGKT, DTPGH, and NKID. Diphthamide is present on His598.

The protein belongs to the TRAFAC class translation factor GTPase superfamily. Classic translation factor GTPase family. EF-G/EF-2 subfamily.

It localises to the cytoplasm. In terms of biological role, catalyzes the GTP-dependent ribosomal translocation step during translation elongation. During this step, the ribosome changes from the pre-translocational (PRE) to the post-translocational (POST) state as the newly formed A-site-bound peptidyl-tRNA and P-site-bound deacylated tRNA move to the P and E sites, respectively. Catalyzes the coordinated movement of the two tRNA molecules, the mRNA and conformational changes in the ribosome. The sequence is that of Elongation factor 2 from Thermoplasma volcanium (strain ATCC 51530 / DSM 4299 / JCM 9571 / NBRC 15438 / GSS1).